A 102-amino-acid polypeptide reads, in one-letter code: Thioredoxin (102 aa).

Positions V2 to N102 constitute a Thioredoxin domain. A disulfide bridge connects residues C30 and C33.

The protein belongs to the thioredoxin family.

Its function is as follows. Participates in various redox reactions through the reversible oxidation of its active center dithiol to a disulfide and catalyzes dithiol-disulfide exchange reactions. The protein is Thioredoxin (trxA) of Mycoplasma genitalium (strain ATCC 33530 / DSM 19775 / NCTC 10195 / G37) (Mycoplasmoides genitalium).